Consider the following 249-residue polypeptide: Proteasome subunit alpha type-7-1 (249 aa).

S177 carries the post-translational modification Phosphoserine.

The protein belongs to the peptidase T1A family. In terms of assembly, the 26S proteasome consists of a 20S proteasome core and two 19S regulatory subunits. The 20S proteasome core is composed of 28 subunits that are arranged in four stacked rings, resulting in a barrel-shaped structure. The two end rings are each formed by seven alpha subunits, and the two central rings are each formed by seven beta subunits. The catalytic chamber with the active sites is on the inside of the barrel. Interacts with PI31; this interaction is reduced by PI31 ADP-ribosylation.

Its subcellular location is the cytoplasm. It is found in the nucleus. The proteasome is a multicatalytic proteinase complex which is characterized by its ability to cleave peptides with Arg, Phe, Tyr, Leu, and Glu adjacent to the leaving group at neutral or slightly basic pH. The proteasome has an ATP-dependent proteolytic activity. The protein is Proteasome subunit alpha type-7-1 (Prosalpha4) of Drosophila melanogaster (Fruit fly).